A 210-amino-acid polypeptide reads, in one-letter code: Imidazole glycerol phosphate synthase subunit HisH 1 (210 aa).

Residues 3-210 form the Glutamine amidotransferase type-1 domain; the sequence is KIAIVDYGMC…LDNFLSFSNV (208 aa). Cys82 acts as the Nucleophile in catalysis. Catalysis depends on residues His189 and Glu191.

As to quaternary structure, heterodimer of HisH and HisF.

The protein resides in the cytoplasm. It catalyses the reaction 5-[(5-phospho-1-deoxy-D-ribulos-1-ylimino)methylamino]-1-(5-phospho-beta-D-ribosyl)imidazole-4-carboxamide + L-glutamine = D-erythro-1-(imidazol-4-yl)glycerol 3-phosphate + 5-amino-1-(5-phospho-beta-D-ribosyl)imidazole-4-carboxamide + L-glutamate + H(+). The enzyme catalyses L-glutamine + H2O = L-glutamate + NH4(+). Its pathway is amino-acid biosynthesis; L-histidine biosynthesis; L-histidine from 5-phospho-alpha-D-ribose 1-diphosphate: step 5/9. In terms of biological role, IGPS catalyzes the conversion of PRFAR and glutamine to IGP, AICAR and glutamate. The HisH subunit provides the glutamine amidotransferase activity that produces the ammonia necessary to HisF for the synthesis of IGP and AICAR. This Parasynechococcus marenigrum (strain WH8102) protein is Imidazole glycerol phosphate synthase subunit HisH 1 (hisH1).